The sequence spans 130 residues: Large ribosomal subunit protein bL12 (130 aa).

Belongs to the bacterial ribosomal protein bL12 family. In terms of assembly, homodimer. Part of the ribosomal stalk of the 50S ribosomal subunit. Forms a multimeric L10(L12)X complex, where L10 forms an elongated spine to which 2 to 4 L12 dimers bind in a sequential fashion. Binds GTP-bound translation factors.

In terms of biological role, forms part of the ribosomal stalk which helps the ribosome interact with GTP-bound translation factors. Is thus essential for accurate translation. The protein is Large ribosomal subunit protein bL12 of Mycolicibacterium paratuberculosis (strain ATCC BAA-968 / K-10) (Mycobacterium paratuberculosis).